Here is a 528-residue protein sequence, read N- to C-terminus: Purine-cytosine permease FCY21 (528 aa).

Residues Met1–Met90 are Cytoplasmic-facing. Ser43 bears the Phosphoserine mark. Thr46 is modified (phosphothreonine). Residues Trp91–Phe111 traverse the membrane as a helical segment. At Asp112–Ser118 the chain is on the extracellular side. A helical transmembrane segment spans residues Val119–Phe139. Topologically, residues Gly140 to Arg161 are cytoplasmic. The helical transmembrane segment at Ile162–Ser182 threads the bilayer. Topologically, residues Ser183–Trp198 are extracellular. The helical transmembrane segment at Ala199 to Ile219 threads the bilayer. At His220–Ala221 the chain is on the cytoplasmic side. Residues Tyr222–Ala242 traverse the membrane as a helical segment. The Extracellular segment spans residues Arg243–Gly260. The helical transmembrane segment at Asn261–Ala281 threads the bilayer. Over Asp282 to Lys295 the chain is Cytoplasmic. Residues Ile296–Ala316 form a helical membrane-spanning segment. Topologically, residues Ala317–Leu340 are extracellular. A helical transmembrane segment spans residues Thr341–Leu361. At Ser362–Val393 the chain is on the cytoplasmic side. The helical transmembrane segment at Ile394 to Phe414 threads the bilayer. At Ser415–Thr416 the chain is on the extracellular side. A helical membrane pass occupies residues Phe417–Cys437. The Cytoplasmic segment spans residues Ser438–Arg460. Residues Leu461 to Gly481 traverse the membrane as a helical segment. At Met482 to Arg493 the chain is on the extracellular side. The helical transmembrane segment at Leu494–Val514 threads the bilayer. The Cytoplasmic portion of the chain corresponds to Tyr515 to Arg528.

Belongs to the purine-cytosine permease (2.A.39) family.

The protein resides in the membrane. Its function is as follows. Probable purine-cytosine permease. This Saccharomyces cerevisiae (strain ATCC 204508 / S288c) (Baker's yeast) protein is Purine-cytosine permease FCY21 (FCY21).